The chain runs to 347 residues: Methionine import ATP-binding protein MetN (347 aa).

In terms of domain architecture, ABC transporter spans 2–241 (IKLEGVSKTY…PATRLGRDFL (240 aa)). 38–45 (GLSGAGKS) is an ATP binding site.

It belongs to the ABC transporter superfamily. Methionine importer (TC 3.A.1.24) family. In terms of assembly, the complex is composed of two ATP-binding proteins (MetN), two transmembrane proteins (MetI) and a solute-binding protein (MetQ).

Its subcellular location is the cell inner membrane. The enzyme catalyses L-methionine(out) + ATP + H2O = L-methionine(in) + ADP + phosphate + H(+). The catalysed reaction is D-methionine(out) + ATP + H2O = D-methionine(in) + ADP + phosphate + H(+). Part of the ABC transporter complex MetNIQ involved in methionine import. Responsible for energy coupling to the transport system. This is Methionine import ATP-binding protein MetN from Chromohalobacter salexigens (strain ATCC BAA-138 / DSM 3043 / CIP 106854 / NCIMB 13768 / 1H11).